Consider the following 548-residue polypeptide: Sensor protein TdiS (548 aa).

A PAS 1 domain is found at Asp20–Glu89. A PAC 1 domain is found at Phe94 to Ala145. A PAS 2 domain is found at His185–Asp256. A PAC 2 domain is found at Lys263 to Leu314. Positions Ala334–Ile548 constitute a Histidine kinase domain. A Phosphohistidine; by autocatalysis modification is found at His337.

Autophosphorylated.

The enzyme catalyses ATP + protein L-histidine = ADP + protein N-phospho-L-histidine.. Its function is as follows. Member of the two-component regulatory system TdiR/TdiS, which probably regulates transcription of toluene catabolic genes (bss operon). May activate TdiR by phosphorylation. The polypeptide is Sensor protein TdiS (tdiS) (Thauera aromatica).